Reading from the N-terminus, the 296-residue chain is Protoheme IX farnesyltransferase 2 (296 aa).

9 helical membrane passes run 7–27, 36–56, 83–103, 108–128, 134–154, 163–183, 207–227, 229–249, and 265–285; these read LLVA…GGYF, PMLL…GCVL, LKAA…LLWW, LTTA…SLWF, YGTL…YCAV, ASLL…IAIF, IHIV…CLGG, AGYG…AIAL, and FAFS…DFQV.

This sequence belongs to the UbiA prenyltransferase family. Protoheme IX farnesyltransferase subfamily.

It localises to the cell inner membrane. The catalysed reaction is heme b + (2E,6E)-farnesyl diphosphate + H2O = Fe(II)-heme o + diphosphate. It functions in the pathway porphyrin-containing compound metabolism; heme O biosynthesis; heme O from protoheme: step 1/1. Converts heme B (protoheme IX) to heme O by substitution of the vinyl group on carbon 2 of heme B porphyrin ring with a hydroxyethyl farnesyl side group. In Pseudomonas paraeruginosa (strain DSM 24068 / PA7) (Pseudomonas aeruginosa (strain PA7)), this protein is Protoheme IX farnesyltransferase 2.